The sequence spans 103 residues: Small ribosomal subunit protein uS10 (103 aa).

The protein belongs to the universal ribosomal protein uS10 family. Part of the 30S ribosomal subunit.

Its function is as follows. Involved in the binding of tRNA to the ribosomes. This Fusobacterium nucleatum subsp. nucleatum (strain ATCC 25586 / DSM 15643 / BCRC 10681 / CIP 101130 / JCM 8532 / KCTC 2640 / LMG 13131 / VPI 4355) protein is Small ribosomal subunit protein uS10.